Here is a 413-residue protein sequence, read N- to C-terminus: Divalent metal cation transporter MntH (413 aa).

The Cytoplasmic portion of the chain corresponds to 1 to 19 (MTDNRVENSSGRAARKLRL). A helical membrane pass occupies residues 20-39 (ALMGPAFIAAIGYIDPGNFA). The Periplasmic segment spans residues 40-51 (TNIQAGASFGYQ). A helical transmembrane segment spans residues 52-71 (LLWVVVWANLMAMLIQILSA). Residues 72 to 95 (KLGIATGKNLAEQIRDHYPRPVVW) are Cytoplasmic-facing. A helical membrane pass occupies residues 96-118 (FYWVQAEIIAMATDLAEFIGAAI). The Periplasmic segment spans residues 119–125 (GFKLILG). A helical membrane pass occupies residues 126 to 145 (VSLLQGAVLTGIATFLILML). The Cytoplasmic segment spans residues 146 to 155 (QRRGQKPLEK). A helical transmembrane segment spans residues 156 to 175 (VIGGLLLFVAAAYIVELFFS). The Periplasmic portion of the chain corresponds to 176–196 (QPDMAQLGKGMVIPALPNPEA). Residues 197–220 (VFLAAGVLGATIMPHVIYLHSSLT) form a helical membrane-spanning segment. Topologically, residues 221 to 238 (QHLHGGTRQQRYSATKWD) are cytoplasmic. The chain crosses the membrane as a helical span at residues 239-258 (VAIAMTIAGFVNLAMMATAA). Over 259 to 276 (AAFHFSGHTGIADLDQAY) the chain is Periplasmic. Residues 277–297 (LTLEPLLSHAAATVFGLSLVA) traverse the membrane as a helical segment. At 298-327 (AGLSSTVVGTLAGQVVMQGFVRFHIPLWVR) the chain is on the cytoplasmic side. Residues 328–344 (RTITMLPSFIVILMGLD) traverse the membrane as a helical segment. Residues 345 to 350 (PTRILV) are Periplasmic-facing. The helical transmembrane segment at 351-370 (MSQVLLSFGIALALVPLLIF) threads the bilayer. Topologically, residues 371–387 (TSNATLMGELVNTRRVK) are cytoplasmic. A helical membrane pass occupies residues 388–406 (QVGWIIVVLVVALNIWLLV). Residues 407–413 (GTVMGLS) are Periplasmic-facing.

It belongs to the NRAMP family.

Its subcellular location is the cell inner membrane. Functionally, h(+)-stimulated, divalent metal cation uptake system. This Salmonella paratyphi C (strain RKS4594) protein is Divalent metal cation transporter MntH.